The following is a 170-amino-acid chain: Putative apoptosis inhibitor ORF87 (170 aa).

2 BIR repeats span residues 22 to 92 (RIKS…PVGK) and 104 to 169 (RLKS…KLSS).

Functionally, may act as an apoptosis inhibitor. This Ostreid herpesvirus 1 (isolate France) (OsHV-1) protein is Putative apoptosis inhibitor ORF87.